Consider the following 195-residue polypeptide: MSKLYFSYATMNAGKSTLLLQAAYNYQERGMRVVMLIAAFDDRAGQGRIASRIGLESEAIPFRAEDDLHGLIERLNGDGSGEIACVFVDEAQFLGEDQVWQLARVADRLGIPVMAYGLRTDFQGKLFPGSMALLAIADELREVRTICHCGRKATMVVRLDGRGKVMREGAQVDVGGNEKYVSYCRRHWDDRMREG.

Residues 9–16 (ATMNAGKS) and 89–92 (DEAQ) each bind ATP. Glutamate 90 functions as the Proton acceptor in the catalytic mechanism. The Zn(2+) site is built by cysteine 147, cysteine 149, cysteine 184, and histidine 187.

The protein belongs to the thymidine kinase family. Homotetramer.

It localises to the cytoplasm. It catalyses the reaction thymidine + ATP = dTMP + ADP + H(+). This Rhizobium meliloti (strain 1021) (Ensifer meliloti) protein is Thymidine kinase.